A 63-amino-acid chain; its full sequence is DNA-directed RNA polymerase subunit omega (63 aa).

Belongs to the RNA polymerase subunit omega family. As to quaternary structure, the RNAP catalytic core consists of 2 alpha, 1 beta, 1 beta' and 1 omega subunit. When a sigma factor is associated with the core the holoenzyme is formed, which can initiate transcription.

The enzyme catalyses RNA(n) + a ribonucleoside 5'-triphosphate = RNA(n+1) + diphosphate. Functionally, promotes RNA polymerase assembly. Latches the N- and C-terminal regions of the beta' subunit thereby facilitating its interaction with the beta and alpha subunits. In Blochmanniella pennsylvanica (strain BPEN), this protein is DNA-directed RNA polymerase subunit omega.